An 85-amino-acid chain; its full sequence is Large ribosomal subunit protein bL27 (85 aa).

Belongs to the bacterial ribosomal protein bL27 family.

The chain is Large ribosomal subunit protein bL27 from Pseudomonas aeruginosa (strain LESB58).